Consider the following 437-residue polypeptide: MSMFLDTAKISVQAGRGGDGMVAFRREKYVPNGGPWGGDGGKGGSVIFRVDEGLRTLMDFRYNRKFKAKSGEKGMTKGMHGRGAEDLIVFVPQGTTVRDAETGKVITDLVEHGQEVVIAKGGRGGRGNIRFATPRNPAPEIAENGEPGEERQLELELKILADVGLVGFPSVGKSTLLSVVSSAKPKIGAYHFTTIVPNLGMVRTKSGDSFAMADLPGLIEGASQGVGLGTQFLRHIERTRVILHVIDMSASEGRDPYEDYVSINNELETYNLRLMERPQIIVANKMDMPEAQENLKAFKKKLAAQYDEFDDLPMIFPISSLAHQGLENLLEATAELLAKTDEFLLYDESDLVDEEAYYGFAEAEKDFEITRDDDATWVLSGEKLERLFVMTNMERDESIMKFARQLRGMGVDEALRERGAKDGDLVRIGKFEFEFVD.

Positions 2 to 160 constitute an Obg domain; the sequence is SMFLDTAKIS…RQLELELKIL (159 aa). The OBG-type G domain maps to 161–338; it reads ADVGLVGFPS…LLEATAELLA (178 aa). GTP is bound by residues 167 to 174, 192 to 196, 214 to 217, 284 to 287, and 319 to 321; these read GFPSVGKS, FTTIV, DLPG, NKMD, and SSL. The Mg(2+) site is built by serine 174 and threonine 194. The OCT domain maps to 359–437; the sequence is GFAEAEKDFE…IGKFEFEFVD (79 aa).

The protein belongs to the TRAFAC class OBG-HflX-like GTPase superfamily. OBG GTPase family. In terms of assembly, monomer. Requires Mg(2+) as cofactor.

Its subcellular location is the cytoplasm. In terms of biological role, an essential GTPase which binds GTP, GDP and possibly (p)ppGpp with moderate affinity, with high nucleotide exchange rates and a fairly low GTP hydrolysis rate. Plays a role in control of the cell cycle, stress response, ribosome biogenesis and in those bacteria that undergo differentiation, in morphogenesis control. The protein is GTPase Obg of Streptococcus pyogenes serotype M18 (strain MGAS8232).